A 233-amino-acid polypeptide reads, in one-letter code: Large ribosomal subunit protein uL1 (233 aa).

Belongs to the universal ribosomal protein uL1 family. In terms of assembly, part of the 50S ribosomal subunit.

Its function is as follows. Binds directly to 23S rRNA. The L1 stalk is quite mobile in the ribosome, and is involved in E site tRNA release. Functionally, protein L1 is also a translational repressor protein, it controls the translation of the L11 operon by binding to its mRNA. The protein is Large ribosomal subunit protein uL1 of Campylobacter jejuni subsp. doylei (strain ATCC BAA-1458 / RM4099 / 269.97).